The following is a 178-amino-acid chain: Glucagon-1 (178 aa).

A signal peptide spans 1-21; sequence MFGIHSLAGVLLLVIVQRQLA. 3 propeptides span residues 83–87, 123–134, and 171–178; these read SGAPS, ESAEESRNGPMS, and SNKRQEDH.

Belongs to the glucagon family.

Its subcellular location is the secreted. In terms of biological role, promotes hydrolysis of glycogen and lipids, and raises the blood sugar level. This Oncorhynchus mykiss (Rainbow trout) protein is Glucagon-1 (gcg1).